Here is a 103-residue protein sequence, read N- to C-terminus: Large ribosomal subunit protein bL21 (103 aa).

This sequence belongs to the bacterial ribosomal protein bL21 family. As to quaternary structure, part of the 50S ribosomal subunit. Contacts protein L20.

In terms of biological role, this protein binds to 23S rRNA in the presence of protein L20. The polypeptide is Large ribosomal subunit protein bL21 (Ruthia magnifica subsp. Calyptogena magnifica).